Consider the following 336-residue polypeptide: Melanoma-associated antigen B17 (336 aa).

Residues 1-17 (MPRGQASKRRAREKRRQ) are compositionally biased toward basic residues. The interval 1-108 (MPRGQASKRR…SSSESTGRDL (108 aa)) is disordered. Composition is skewed to low complexity over residues 39–54 (PSSS…QSFP) and 62–80 (SQRA…LTSS). The span at 90–103 (ESPNSFHGPSSSES) shows a compositional bias: polar residues. An MAGE domain is found at 109-336 (LNTKTGELVQ…RARASRSFQP (228 aa)).

This Homo sapiens (Human) protein is Melanoma-associated antigen B17 (MAGEB17).